Consider the following 75-residue polypeptide: Veswaprin-b (75 aa).

Residues 1-24 form the signal peptide; it reads MSSGGLLLLLGLLTLWAELTPISG. Positions 23–42 are disordered; that stretch reads SGQDRPKKPGLRPPRPQKPP. Residues 27-72 form the WAP; atypical domain; sequence RPKKPGLRPPRPQKPPCVRECKNDWRCPGEQKCCRYGCIYECRDPI. 3 cysteine pairs are disulfide-bonded: Cys43–Cys64, Cys47–Cys59, and Cys53–Cys68.

The protein belongs to the venom waprin family. In terms of tissue distribution, expressed by the venom gland.

Its subcellular location is the secreted. Damages membranes of susceptible bacteria. Has no hemolytic activity. Not toxic to mice. Does not inhibit the proteinases elastase and cathepsin G. In Demansia vestigiata (Lesser black whip snake), this protein is Veswaprin-b.